The chain runs to 429 residues: 46 kDa membrane protein (429 aa).

Transmembrane regions (helical) follow at residues 26-46, 51-71, 99-119, 173-193, 224-244, 279-299, 315-335, 360-380, and 407-427; these read AALT…EDVF, TGID…VSVL, LVLV…VLLI, FLIH…ALLP, LLIK…AHPV, TLLF…TDVV, LLTV…IDNI, ILWW…AVGA, and IAVT…RYLV.

The protein belongs to the CitM (TC 2.A.11) transporter family.

Its subcellular location is the cell membrane. This Mycobacterium leprae (strain TN) protein is 46 kDa membrane protein (ag45).